Here is a 1475-residue protein sequence, read N- to C-terminus: MKLKYNKLLVSVVIVTFVTFGLLLAECFGKSIDYQEKSIFPSFVSQGFFETRTNNEEYIIEKIAQTQENGVDMRSTLHFTQHGYLLNNISNLKIKFRQKTYTLNDVCFKPHITIFQQSSSSDQNEYPHYIQRLLLEMQRLSPCLIVTPLNCFYDIYRIHGEISNWNKNTDFLNRRLRNSYIEAIGENDERPYVKSNYGPSLIKSWADHMFDLPSKSFTNSTKDALFQKIKLWLLSIEPRQKTCAASIHSCDTPLDSEHYFNICTDMQSVDNFAEKKTKFKLEDVDEEFAMNLDCVDDQEQFIEWMQELEIRKMYSHVTEKPDYPNVVNQTCDKIFHDLNSTGIEFFDGSRSFSSTKSQFDTMQTEIVLLTPEMLLSAMQHSDFVNGFESIWTIEKAEELIHEFRLALKEETEKFKENRMSKMIRVTSRVLDNTVTTKLQSFSEKQTIHFVVNVHSLIVILFTIFVWSGAPLRSAFMFFVRDALTCLLFCFVCSTDGVIVLDTELIKYIIVLTLANLYFTTRSSFCTERLSRCIQREKRFPINSNFASLITVDTMTDSRQIQYFLSTVTKYQAAQDSYSNELFERFPKNWGCTSILIFPIVFVYWYFIDSNFDKICVSVLPSFCLAAGEELFAKNMFWKEREAMQAKQRLENEEQAESITGSSLEKLFAGNKPVSNTDKANIVKKSSIIRNQKPCLQDLSPGTYDVSNFMKYPHQASRIFREKIIGLYLRILKLRTLGVILCIPAILLIVISIGLLFIPVKRETLHTDSKQDDIFIEFEIFNFSTNWKIVNQNLKQFSEDIESIGTLYTISNWQKSFERFEQETNKNASAEWNILFKWINDEPINSAVTLFSEKSSGNQTIANPFKFRLRYGFDAKNETTVIEIVQKIDELLSKCSKNLSPKAVGVLYEHYHRIAVVWNLFAFNQLTTAGIFIILLSIITFIFAITPTIKATFLFSLLVVGTQIEVAALVHLFSLDHHQIYTNLALFAGFLAAWDPFCALLRYRRRILYKSETRRTPELASKRRVLLPIVATADIAQFFVLLITAFSILAIICSIVPELNIFFVPTVILIVIQIVAVFNSIIVSIATKQMFESEVRHYLHRDLRGSTTAVRVYNLVQKQRLASSLDEPQVELDEFSIKRSSPPCRYYAPPPKYSCKKRSRSSDEDEDSDPNQPGPSNRRSPKTGNKRVRGNGDNTELYIPNRYELIVSGKSVGGNTSAAWNGPGSTLEQNMNALEECFELGVDEYDFDEHDGDEGCELVQDMLDRERNLMNKRSTAQRRESRNIEKMKKSQENLDKEKSEEKISESKKNQDDSIESPNLPGTPANLPVDEPLPPVGRLYIVEHVLPEEYRRDPLTEPPSMEDCIRAHSDPNLPPHPRADQYPASFTRPMVEYCEDIYWTHRTGQLPPGLQVPRRPYDYYHITERTPPPEDLNWVPPAESPPIPIPQQAFDLLEERRRNHREQQDEAREGDLSDPEV.

A signal peptide spans 1–31; sequence MKLKYNKLLVSVVIVTFVTFGLLLAECFGKS. The next 11 membrane-spanning stretches (helical) occupy residues 446-466, 474-494, 496-516, 589-609, 737-757, 902-922, 928-948, 952-972, 979-999, 1034-1054, and 1060-1080; these read TIHF…IFVW, AFMF…VCST, GVIV…LANL, WGCT…FIDS, GVIL…LLFI, AVGV…LFAF, AGIF…TPTI, FLFS…VHLF, IYTN…FCAL, IAQF…ICSI, and IFFV…FNSI. The interaction with fem-3 stretch occupies residues 1133–1273; it reads EFSIKRSSPP…RERNLMNKRS (141 aa). 2 disordered regions span residues 1142-1194 and 1267-1330; these read PCRY…GDNT and NLMN…VDEP. Residues 1178–1188 show a composition bias toward basic residues; that stretch reads RSPKTGNKRVR. A compositionally biased stretch (basic and acidic residues) spans 1276-1310; the sequence is QRRESRNIEKMKKSQENLDKEKSEEKISESKKNQD. The tract at residues 1392-1413 is MX regulatory domain; required for tra-1 binding; it reads CEDIYWTHRTGQLPPGLQVPRR. The disordered stretch occupies residues 1424–1475; it reads TPPPEDLNWVPPAESPPIPIPQQAFDLLEERRRNHREQQDEAREGDLSDPEV. Over residues 1451-1469 the composition is skewed to basic and acidic residues; it reads LEERRRNHREQQDEAREGD.

In terms of assembly, interacts with tra-1 and fem-3. In terms of processing, undergoes cleavage by tra-3 to produce a feminizing carboxy-terminal isoform Tra-2B. In terms of tissue distribution, somatic and germline tissues. Isoform Tra-2B is specific to oocytes.

Its subcellular location is the membrane. Plays a major role in controlling sexual cell fates. Promotes female development in XX animals where it sequesters one or more of the FEM proteins to the membrane thereby freeing the tra-1 protein (a putative transcription factor) to enter the nucleus and promote female development. In XO animals it acts as a receptor for her-1 which prevents it from binding to FEM proteins thereby repressing the activity of tra-1. Negatively regulates male development when bound to fem-3 and is required together with tra-1 for promoting spermatogenesis. Also required for feminizing tra-3 activity. This Caenorhabditis elegans protein is Sex-determining transformer protein 2 (tra-2).